Here is an 87-residue protein sequence, read N- to C-terminus: Protein Tat (87 aa).

Positions 1-21 are disordered; that stretch reads MDPVDPNLEPWNHPGSQPRTP. Positions 1-24 are interaction with human CREBBP; it reads MDPVDPNLEPWNHPGSQPRTPCNK. Residues 1 to 48 are transactivation; the sequence is MDPVDPNLEPWNHPGSQPRTPCNKCYCKKCCYHCQMCFITKGLGISYG. The Zn(2+) site is built by C22, C25, and C27. Residues 22-37 form a cysteine-rich region; it reads CNKCYCKKCCYHCQMC. Position 28 is an N6-acetyllysine; by host PCAF (K28). The Zn(2+) site is built by C30, H33, C34, and C37. The tract at residues 38 to 48 is core; the sequence is FITKGLGISYG. The tract at residues 45 to 87 is disordered; that stretch reads ISYGRKKRRQRRRPPQGNQAHQDPLPEQPSSQHRGDHPTGPKE. The segment covering 48-58 has biased composition (basic residues); sequence GRKKRRQRRRP. The Nuclear localization signal, RNA-binding (TAR), and protein transduction motif lies at 49–57; sequence RKKRRQRRR. Residues 49 to 87 form an interaction with the host capping enzyme RNGTT region; that stretch reads RKKRRQRRRPPQGNQAHQDPLPEQPSSQHRGDHPTGPKE. Residues K50 and K51 each carry the N6-acetyllysine; by host EP300 and GCN5L2 modification. 2 positions are modified to asymmetric dimethylarginine; by host PRMT6: R52 and R53. Over residues 77 to 87 the composition is skewed to basic and acidic residues; that stretch reads HRGDHPTGPKE. Positions 78–80 match the Cell attachment site motif; sequence RGD.

Belongs to the lentiviruses Tat family. As to quaternary structure, interacts with host CCNT1. Associates with the P-TEFb complex composed at least of Tat, P-TEFb (CDK9 and CCNT1), TAR RNA, RNA Pol II. Recruits the HATs CREBBP, TAF1/TFIID, EP300, PCAF and GCN5L2. Interacts with host KAT5/Tip60; this interaction targets the latter to degradation. Interacts with the host deacetylase SIRT1. Interacts with host capping enzyme RNGTT; this interaction stimulates RNGTT. Binds to host KDR, and to the host integrins ITGAV/ITGB3 and ITGA5/ITGB1. Interacts with host KPNB1/importin beta-1 without previous binding to KPNA1/importin alpha-1. Interacts with EIF2AK2. Interacts with host nucleosome assembly protein NAP1L1; this interaction may be required for the transport of Tat within the nucleus, since the two proteins interact at the nuclear rim. Interacts with host C1QBP/SF2P32; this interaction involves lysine-acetylated Tat. Interacts with the host chemokine receptors CCR2, CCR3 and CXCR4. Interacts with host DPP4/CD26; this interaction may trigger an anti-proliferative effect. Interacts with host LDLR. Interacts with the host extracellular matrix metalloproteinase MMP1. Interacts with host PRMT6; this interaction mediates Tat's methylation. Interacts with, and is ubiquitinated by MDM2/Hdm2. Interacts with host PSMC3 and HTATIP2. Interacts with STAB1; this interaction may overcome SATB1-mediated repression of IL2 and IL2RA (interleukin) in T cells by binding to the same domain than HDAC1. Interacts (when acetylated) with human CDK13, thereby increasing HIV-1 mRNA splicing and promoting the production of the doubly spliced HIV-1 protein Nef. Interacts with host TBP; this interaction modulates the activity of transcriptional pre-initiation complex. Interacts with host RELA. Interacts with host PLSCR1; this interaction negatively regulates Tat transactivation activity by altering its subcellular distribution. In terms of processing, asymmetrical arginine methylation by host PRMT6 seems to diminish the transactivation capacity of Tat and affects the interaction with host CCNT1. Acetylation by EP300, CREBBP, GCN5L2/GCN5 and PCAF regulates the transactivation activity of Tat. EP300-mediated acetylation of Lys-50 promotes dissociation of Tat from the TAR RNA through the competitive binding to PCAF's bromodomain. In addition, the non-acetylated Tat's N-terminus can also interact with PCAF. PCAF-mediated acetylation of Lys-28 enhances Tat's binding to CCNT1. Lys-50 is deacetylated by SIRT1. Post-translationally, polyubiquitination by host MDM2 does not target Tat to degradation, but activates its transactivation function and fosters interaction with CCNT1 and TAR RNA. In terms of processing, phosphorylated by EIF2AK2 on serine and threonine residues adjacent to the basic region important for TAR RNA binding and function. Phosphorylation of Tat by EIF2AK2 is dependent on the prior activation of EIF2AK2 by dsRNA.

The protein resides in the host nucleus. The protein localises to the host nucleolus. It is found in the host cytoplasm. It localises to the secreted. Transcriptional activator that increases RNA Pol II processivity, thereby increasing the level of full-length viral transcripts. Recognizes a hairpin structure at the 5'-LTR of the nascent viral mRNAs referred to as the transactivation responsive RNA element (TAR) and recruits the cyclin T1-CDK9 complex (P-TEFb complex) that will in turn hyperphosphorylate the RNA polymerase II to allow efficient elongation. The CDK9 component of P-TEFb and other Tat-activated kinases hyperphosphorylate the C-terminus of RNA Pol II that becomes stabilized and much more processive. Other factors such as HTATSF1/Tat-SF1, SUPT5H/SPT5, and HTATIP2 are also important for Tat's function. Besides its effect on RNA Pol II processivity, Tat induces chromatin remodeling of proviral genes by recruiting the histone acetyltransferases (HATs) CREBBP, EP300 and PCAF to the chromatin. This also contributes to the increase in proviral transcription rate, especially when the provirus integrates in transcriptionally silent region of the host genome. To ensure maximal activation of the LTR, Tat mediates nuclear translocation of NF-kappa-B by interacting with host RELA. Through its interaction with host TBP, Tat may also modulate transcription initiation. Tat can reactivate a latently infected cell by penetrating in it and transactivating its LTR promoter. In the cytoplasm, Tat is thought to act as a translational activator of HIV-1 mRNAs. Its function is as follows. Extracellular circulating Tat can be endocytosed by surrounding uninfected cells via the binding to several surface receptors such as CD26, CXCR4, heparan sulfate proteoglycans (HSPG) or LDLR. Neurons are rarely infected, but they internalize Tat via their LDLR. Through its interaction with nuclear HATs, Tat is potentially able to control the acetylation-dependent cellular gene expression. Modulates the expression of many cellular genes involved in cell survival, proliferation or in coding for cytokines or cytokine receptors. Tat plays a role in T-cell and neurons apoptosis. Tat induced neurotoxicity and apoptosis probably contribute to neuroAIDS. Circulating Tat also acts as a chemokine-like and/or growth factor-like molecule that binds to specific receptors on the surface of the cells, affecting many cellular pathways. In the vascular system, Tat binds to ITGAV/ITGB3 and ITGA5/ITGB1 integrins dimers at the surface of endothelial cells and competes with bFGF for heparin-binding sites, leading to an excess of soluble bFGF. This is Protein Tat from Homo sapiens (Human).